We begin with the raw amino-acid sequence, 513 residues long: 2,3-bisphosphoglycerate-independent phosphoglycerate mutase (513 aa).

Asp-15 and Ser-65 together coordinate Mn(2+). Residue Ser-65 is the Phosphoserine intermediate of the active site. Residues His-126, 156–157 (RD), Arg-188, Arg-194, 263–266 (RADR), and Lys-337 each bind substrate. Positions 402, 406, 443, 444, and 461 each coordinate Mn(2+).

The protein belongs to the BPG-independent phosphoglycerate mutase family. Monomer. Mn(2+) is required as a cofactor.

The enzyme catalyses (2R)-2-phosphoglycerate = (2R)-3-phosphoglycerate. It functions in the pathway carbohydrate degradation; glycolysis; pyruvate from D-glyceraldehyde 3-phosphate: step 3/5. In terms of biological role, catalyzes the interconversion of 2-phosphoglycerate and 3-phosphoglycerate. This Moorella thermoacetica (strain ATCC 39073 / JCM 9320) protein is 2,3-bisphosphoglycerate-independent phosphoglycerate mutase.